The sequence spans 362 residues: Fructose-bisphosphate aldolase (362 aa).

Residue serine 65 coordinates D-glyceraldehyde 3-phosphate. Aspartate 112 acts as the Proton donor in catalysis. The Zn(2+) site is built by histidine 113, aspartate 147, glutamate 177, and histidine 229. Position 230 (glycine 230) interacts with dihydroxyacetone phosphate. Histidine 268 is a Zn(2+) binding site. Residues 269 to 271 (GGS) and 290 to 293 (NVDT) each bind dihydroxyacetone phosphate.

Belongs to the class II fructose-bisphosphate aldolase family. As to quaternary structure, homodimer. Zn(2+) serves as cofactor.

It catalyses the reaction beta-D-fructose 1,6-bisphosphate = D-glyceraldehyde 3-phosphate + dihydroxyacetone phosphate. It participates in carbohydrate degradation; glycolysis; D-glyceraldehyde 3-phosphate and glycerone phosphate from D-glucose: step 4/4. Functionally, catalyzes the aldol condensation of dihydroxyacetone phosphate (DHAP or glycerone-phosphate) with glyceraldehyde 3-phosphate (G3P) to form fructose 1,6-bisphosphate (FBP) in gluconeogenesis and the reverse reaction in glycolysis. The protein is Fructose-bisphosphate aldolase (fbaA) of Aspergillus oryzae (strain ATCC 42149 / RIB 40) (Yellow koji mold).